The primary structure comprises 199 residues: MVKIGVCGPVGSGKTALIEALTRHMSKDYDMAVITNDIYTKEDAEFMCKNSVMPRDRIIGVETGGCPHTAIREDASMNLEAVEEMHGRFPNLELLLIESGGDNLSATFNPELADFTIFVIDVAEGDKIPRKGGPGITRSDLLVINKIDLAPYVGADLKVMERDSKKMRGEKPFIFTNIRAKEGLDDVIAWIKRNALLED.

GTP is bound at residue 8 to 15 (GPVGSGKT).

It belongs to the SIMIBI class G3E GTPase family. UreG subfamily. In terms of assembly, homodimer. UreH, UreF and UreG form a complex that acts as a GTP-hydrolysis-dependent molecular chaperone, activating the urease apoprotein by helping to assemble the nickel containing metallocenter of UreC. The UreE protein probably delivers the nickel.

It is found in the cytoplasm. Functionally, facilitates the functional incorporation of the urease nickel metallocenter. This process requires GTP hydrolysis, probably effectuated by UreG. The protein is Urease accessory protein UreG of Helicobacter pylori (strain J99 / ATCC 700824) (Campylobacter pylori J99).